The primary structure comprises 43 residues: uncharacterized protein (43 aa).

Residues 1 to 17 form the signal peptide; the sequence is MYRRLLLNLFCMVFLQA.

This is an uncharacterized protein from Helicobacter pylori (strain J99 / ATCC 700824) (Campylobacter pylori J99).